The sequence spans 335 residues: Tetraacyldisaccharide 4'-kinase (335 aa).

58-65 (TMGGAGKT) contacts ATP.

The protein belongs to the LpxK family.

It catalyses the reaction a lipid A disaccharide + ATP = a lipid IVA + ADP + H(+). The protein operates within glycolipid biosynthesis; lipid IV(A) biosynthesis; lipid IV(A) from (3R)-3-hydroxytetradecanoyl-[acyl-carrier-protein] and UDP-N-acetyl-alpha-D-glucosamine: step 6/6. Transfers the gamma-phosphate of ATP to the 4'-position of a tetraacyldisaccharide 1-phosphate intermediate (termed DS-1-P) to form tetraacyldisaccharide 1,4'-bis-phosphate (lipid IVA). The sequence is that of Tetraacyldisaccharide 4'-kinase from Caulobacter vibrioides (strain ATCC 19089 / CIP 103742 / CB 15) (Caulobacter crescentus).